We begin with the raw amino-acid sequence, 162 residues long: Ribosome maturation factor RimP (162 aa).

Belongs to the RimP family.

The protein resides in the cytoplasm. In terms of biological role, required for maturation of 30S ribosomal subunits. This Leptospira borgpetersenii serovar Hardjo-bovis (strain JB197) protein is Ribosome maturation factor RimP.